Here is a 445-residue protein sequence, read N- to C-terminus: FAD-dependent monooxygenase sorC (445 aa).

Residues 8–28 (PFEVAIVGGGITGLALAVGLL) form a helical membrane-spanning segment. The N-linked (GlcNAc...) asparagine glycan is linked to N31. FAD-binding residues include E38 and R119. The active site involves R201. Residues D323 and A336 each contribute to the FAD site. N358 carries N-linked (GlcNAc...) asparagine glycosylation.

Belongs to the paxM FAD-dependent monooxygenase family. Requires FAD as cofactor.

It is found in the membrane. Its pathway is secondary metabolite biosynthesis. Its function is as follows. FAD-dependent monooxygenase; part of the gene cluster that mediates the biosynthesis of sorbicillinoids, a diverse group of yellow secondary metabolites that restrict growth of competing pathogenic fungi but not of bacteria. Sorbicillinoids biosynthesis requires the action of two PKSs. SorA iteratively combines three acetyl units and the growing chain is modified by the ketoacyl reductase subunit, and optional by the enoyl reductase subunit in the second cycle. The polyketide is then handed over to the PKS SorB, which adds three more acetyl units, and two methyl groups. SorB releases an aldehyde, which undergoes spontaneous cyclization resulting in the formation of sorbicillin or 2',3'-dihydrosorbicillin. The monooxygenase sorC oxidizes sorbicillin and 2',3'-dihydrosorbicillin to 2',3'-dihydrosorbicillinol and sorbicillinol, respectively. The oxidoreductase sorD further converts sorbicillinol into oxosorbicillinol. Sorbicillinol is the building block for the other sorbicillinoids such as disorbicillinol, bisvertinolon, and dihydrobisvertinolone. The sequence is that of FAD-dependent monooxygenase sorC from Penicillium rubens (strain ATCC 28089 / DSM 1075 / NRRL 1951 / Wisconsin 54-1255) (Penicillium chrysogenum).